The primary structure comprises 405 residues: MSPTRVLVLNSGSSSVKYQLLDMRDSSRLAVGLVERIGEGTSRLKHTPLTTGVSRELTSPVADHAAALKTVAEELAKDGLGLDSPELAAIGHRVVHGGRSFTEPTVIDDDVLAEIERLIPVAPLHNPANLTGIRTAMALRPDLPQVAVFDTAFHTTMPESAARYAIDVKTADEHRVRRYGFHGTSHAYVSRATAKLLGRAPKDVNLIVLHLGNGASASAVRGGRCVDTSMGLTPLEGLVMGTRSGDMDPAVIFHLMRVGGMSTDEVDTLLNTKSGLIGLCGDNDMREIRRRVDEGDEQAALAFDIYIHRLKKYIGAYYAVLGRVDAVAFTAGVGENAAPVRAAAIAGLEELGLVVDSERNAVRSDEPRIVSPEDARVAVAVVPTDEELEIAQQTYALVGTAHHLT.

A Mg(2+)-binding site is contributed by Asn-10. Lys-17 is a binding site for ATP. Residue Arg-93 coordinates substrate. The active-site Proton donor/acceptor is the Asp-150. Residues 210-214, 284-286, and 332-336 contribute to the ATP site; these read HLGNG, DMR, and GVGEN. Residue Glu-386 participates in Mg(2+) binding.

It belongs to the acetokinase family. As to quaternary structure, homodimer. Requires Mg(2+) as cofactor. Mn(2+) serves as cofactor.

It localises to the cytoplasm. The enzyme catalyses acetate + ATP = acetyl phosphate + ADP. Its pathway is metabolic intermediate biosynthesis; acetyl-CoA biosynthesis; acetyl-CoA from acetate: step 1/2. Catalyzes the formation of acetyl phosphate from acetate and ATP. Can also catalyze the reverse reaction. This is Acetate kinase from Streptomyces avermitilis (strain ATCC 31267 / DSM 46492 / JCM 5070 / NBRC 14893 / NCIMB 12804 / NRRL 8165 / MA-4680).